The following is a 98-amino-acid chain: Integration host factor subunit beta (98 aa).

This sequence belongs to the bacterial histone-like protein family. Heterodimer of an alpha and a beta chain.

In terms of biological role, this protein is one of the two subunits of integration host factor, a specific DNA-binding protein that functions in genetic recombination as well as in transcriptional and translational control. This chain is Integration host factor subunit beta, found in Pseudomonas syringae pv. tomato (strain ATCC BAA-871 / DC3000).